Consider the following 313-residue polypeptide: Foldase protein PrsA (313 aa).

Residues 1-20 (MKKKLLAGAITLLSVATLAA) form the signal peptide. The N-palmitoyl cysteine moiety is linked to residue Cys-21. Cys-21 is lipidated: S-diacylglycerol cysteine. Residues 143–241 (TPDVTAQIIR…SQYYIVKLTK (99 aa)) enclose the PpiC domain.

This sequence belongs to the PrsA family.

The protein localises to the cell membrane. The catalysed reaction is [protein]-peptidylproline (omega=180) = [protein]-peptidylproline (omega=0). Plays a major role in protein secretion by helping the post-translocational extracellular folding of several secreted proteins. In Streptococcus pneumoniae (strain ATCC BAA-255 / R6), this protein is Foldase protein PrsA.